The following is a 243-amino-acid chain: Ribonuclease 3 (243 aa).

One can recognise an RNase III domain in the interval 10–146; sequence INRFRKRFDT…FIGALYLDQG (137 aa). Glu-59 serves as a coordination point for Mg(2+). Asp-63 is an active-site residue. Asp-132 and Glu-135 together coordinate Mg(2+). Residue Glu-135 is part of the active site. The DRBM domain maps to 172–241; sequence DFKTQFQEYV…AESAYKQLKQ (70 aa). The segment covering 219–231 has biased composition (basic and acidic residues); sequence GKGKTKKESEQRA. The disordered stretch occupies residues 219-243; sequence GKGKTKKESEQRAAESAYKQLKQIK.

The protein belongs to the ribonuclease III family. In terms of assembly, homodimer. The cofactor is Mg(2+).

The protein localises to the cytoplasm. The enzyme catalyses Endonucleolytic cleavage to 5'-phosphomonoester.. Functionally, digests double-stranded RNA. Involved in the processing of primary rRNA transcript to yield the immediate precursors to the large and small rRNAs (23S and 16S). Processes some mRNAs, and tRNAs when they are encoded in the rRNA operon. Processes pre-crRNA and tracrRNA of type II CRISPR loci if present in the organism. The chain is Ribonuclease 3 from Staphylococcus aureus (strain bovine RF122 / ET3-1).